A 335-amino-acid polypeptide reads, in one-letter code: CTD kinase subunit beta (335 aa).

Cyclin N-terminal domains lie at 26–151 (ILST…CFDF) and 158–241 (NYMV…LYMH). The tract at residues 269–293 (KNSGRPQKPPQIDPHSSSLADEYRE) is disordered.

This sequence belongs to the cyclin family. In terms of assembly, CTDK-I consists of three subunits, ctk1/lsk1, ctk2/lsc1 and ctk3 (also called alpha, beta and gamma). Interacts with ctk1/lsk1. This interaction is dependent on ctk1/lsk1 kinase activity.

The protein localises to the cytoplasm. It is found in the nucleus. Its function is as follows. Cyclin subunit of the CTDK-I complex, which hyperphosphorylates the C-terminal heptapeptide repeat domain (CTD) of the largest RNA polymerase II subunit. As part of the CTDK-I complex, involved in RNA polymerase II transcriptional elongation and pre-mRNA 3'-end processing. Together with ctk3, required for ctk1/lsk1 CTD kinase activation. Together with ctk1/lsk1, required for the regulation of cytokinesis by phosphorylating 'Ser-2' residues found in the heptad repeats of the CTD. The sequence is that of CTD kinase subunit beta (lsc1) from Schizosaccharomyces pombe (strain 972 / ATCC 24843) (Fission yeast).